Consider the following 92-residue polypeptide: Small ribosomal subunit protein uS19 (92 aa).

This sequence belongs to the universal ribosomal protein uS19 family.

Its function is as follows. Protein S19 forms a complex with S13 that binds strongly to the 16S ribosomal RNA. This is Small ribosomal subunit protein uS19 from Corynebacterium urealyticum (strain ATCC 43042 / DSM 7109).